A 425-amino-acid chain; its full sequence is Glutamyl-tRNA(Gln) amidotransferase subunit A (425 aa).

Active-site charge relay system residues include Lys-29 and Ser-104. The active-site Acyl-ester intermediate is the Ser-128.

Belongs to the amidase family. GatA subfamily. In terms of assembly, heterotrimer of A, B and C subunits.

The enzyme catalyses L-glutamyl-tRNA(Gln) + L-glutamine + ATP + H2O = L-glutaminyl-tRNA(Gln) + L-glutamate + ADP + phosphate + H(+). Functionally, allows the formation of correctly charged Gln-tRNA(Gln) through the transamidation of misacylated Glu-tRNA(Gln) in organisms which lack glutaminyl-tRNA synthetase. The reaction takes place in the presence of glutamine and ATP through an activated gamma-phospho-Glu-tRNA(Gln). In Haloarcula marismortui (strain ATCC 43049 / DSM 3752 / JCM 8966 / VKM B-1809) (Halobacterium marismortui), this protein is Glutamyl-tRNA(Gln) amidotransferase subunit A.